A 274-amino-acid chain; its full sequence is Methylamine utilization protein MauF (274 aa).

Helical transmembrane passes span 30-50 (WTRALILAASAAGGGAAALAM), 52-72 (AAHVALVLGLAAFAGGLLSTW), 105-125 (LGYALGALILGTLLGAIGGIA), 127-147 (LSGFATSFGLGLLAVIGLAYG), 176-196 (WVVGGLYGLSLGLDYLTYVQT), 202-222 (VTAAAVLSGNVAEAVALIAIF), and 253-273 (AAIADGAILTAVGAAFAMLAL).

The protein resides in the cell membrane. The protein operates within one-carbon metabolism; methylamine degradation. This chain is Methylamine utilization protein MauF (mauF), found in Paracoccus versutus (Thiobacillus versutus).